The sequence spans 457 residues: Glucuronide carrier protein homolog (457 aa).

The Cytoplasmic segment spans residues 1-11 (MNQQLSWRTIV). Residues 12–34 (GYSLGDVANNFAFAMGALFLLSY) form a helical membrane-spanning segment. Topologically, residues 35-37 (YTD) are periplasmic. Residues 38 to 60 (VAGVGAAAAGTMLLLVRVFDAFA) form a helical membrane-spanning segment. The Cytoplasmic segment spans residues 61 to 79 (DVFAGRVVDSVNTRWGKFR). Residues 80–100 (PFLLFGTAPLMIFSVLVFWVL) form a helical membrane-spanning segment. The Periplasmic portion of the chain corresponds to 101 to 108 (TDWSHGSK). Residues 109–129 (VVYAYLTYMGLGLCYSLVNIP) traverse the membrane as a helical segment. Residues 130–146 (YGSLATAMTQQPQSRAR) are Cytoplasmic-facing. The chain crosses the membrane as a helical span at residues 147 to 167 (LGAARGIAASLTFVCLAFLIG). The Periplasmic segment spans residues 168 to 180 (PSIKNSSPEEMVS). The chain crosses the membrane as a helical span at residues 181–201 (VYHFWTIVLAIAGMVLYFICF). Residues 202-228 (KSTRENVVRIVAQPSLNISLQTLKRNR) lie on the Cytoplasmic side of the membrane. Residues 229–249 (PLFMLCIGALCVLISTFAVSA) form a helical membrane-spanning segment. Residues 250 to 263 (SSLFYVRYVLNDTG) lie on the Periplasmic side of the membrane. Residues 264–284 (LFTVLVLVQNLVGTVASAPLV) form a helical membrane-spanning segment. Residues 285–296 (PGMVARIGKKNT) lie on the Cytoplasmic side of the membrane. A helical transmembrane segment spans residues 297-316 (FLIGALLGTCGYLLFFWVSV). Residues 317-320 (WSLP) are Periplasmic-facing. The helical transmembrane segment at 321 to 343 (VALVALAIASIGQGVTMTVMWAL) threads the bilayer. Residues 344–372 (EADTVEYGEYLTGVRIEGLTYSLFSFTRK) are Cytoplasmic-facing. A helical membrane pass occupies residues 373–393 (CGQAIGGSIPAFILGLSGYIA). At 394-408 (NQVQTPEVIMGIRTS) the chain is on the periplasmic side. The helical transmembrane segment at 409–429 (IALVPCGFMLLAFVIIWFYPL) threads the bilayer. Residues 430–457 (TDKKFKEIVVEIDNRKKVQQQLISDITN) are Cytoplasmic-facing.

It belongs to the sodium:galactoside symporter (TC 2.A.2) family.

It localises to the cell inner membrane. In Escherichia coli (strain K12), this protein is Glucuronide carrier protein homolog (uidB).